Consider the following 350-residue polypeptide: NAD-dependent protein deacetylase sirtuin-2 (350 aa).

Residues 4-14 (LRNLFTQTLGL) carry the Nuclear export signal motif. A Phosphoserine modification is found at Ser-16. Residues 20–301 (RLLDELTLEG…LALADLLGWK (282 aa)) form the Deacetylase sirtuin-type domain. NAD(+) contacts are provided by residues 48–52 (AGIST) and 58–60 (DFR). Ser-63 is modified (phosphoserine). An NAD(+)-binding site is contributed by 130 to 133 (QNID). His-150 acts as the Proton acceptor in catalysis. 2 residues coordinate Zn(2+): Cys-158 and Cys-163. At Ser-170 the chain carries Phosphoserine. Residues Cys-184 and Cys-187 each contribute to the Zn(2+) site. NAD(+) is bound by residues 225–226 (TS), 249–251 (NKE), and Cys-287. Residues 312–350 (ANIDAQSGSQASNPSATVSPRKSPPPAKEAARTKEKEEH) form a disordered region. Positions 315-331 (DAQSGSQASNPSATVSP) are enriched in polar residues. Phosphoserine occurs at positions 330 and 334. The span at 340–350 (EAARTKEKEEH) shows a compositional bias: basic and acidic residues.

This sequence belongs to the sirtuin family. Class I subfamily. In terms of assembly, interacts with CDC20, FOXO3 and FZR1. Associates with microtubules in primary cortical mature neurons. Homotrimer. Interacts (via both phosphorylated, unphosphorylated, active or inactive forms) with HDAC6; the interaction is necessary for the complex to interact with alpha-tubulin, suggesting that these proteins belong to a large complex that deacetylates the cytoskeleton. Interacts with FOXO1; the interaction is disrupted upon serum-starvation or oxidative stress, leading to increased level of acetylated FOXO1 and induction of autophagy. Interacts with RELA; the interaction occurs in the cytoplasm and is increased in a TNF-alpha-dependent manner. Interacts with HOXA10; the interaction is direct. Interacts with YWHAB and YWHAG; the interactions occur in a AKT-dependent manner and increase SIRT2-dependent TP53 deacetylation. Interacts with MAPK1/ERK2 and MAPK3/ERK1; the interactions increase SIRT2 stability and deacetylation activity. Interacts (phosphorylated form) with KMT5A isoform 2; the interaction is direct, stimulates KMT5A-mediated methyltransferase activity on histone at 'Lys-20' (H4K20me1) and is increased in a H(2)O(2)-induced oxidative stress-dependent manner. Interacts with G6PD; the interaction is enhanced by H(2)O(2) treatment. Interacts with a G1/S-specific cyclin E-CDK2 complex. Interacts with AURKA, CDK5R1 (p35 form) and CDK5 and HIF1A. Interacts with the tRNA ligase SARS1; recruited to the VEGFA promoter via interaction with SARS1. Interacts with BEX4; negatively regulates alpha-tubulin deacetylation by SIRT2. The cofactor is Zn(2+). Phosphorylated at phosphoserine and phosphothreonine. Phosphorylated at Ser-330 by a mitotic kinase CDK1/cyclin B at the G2/M transition; phosphorylation regulates the delay in cell-cycle progression. Phosphorylated at Ser-330 by a mitotic kinase G1/S-specific cyclin E/Cdk2 complex; phosphorylation inactivates SIRT2-mediated alpha-tubulin deacetylation and thereby negatively regulates cell adhesion, cell migration and neurite outgrowth during neuronal differentiation. Phosphorylated by cyclin A/Cdk2 and p35-Cdk5 complexes and to a lesser extent by the cyclin D3/Cdk4 and cyclin B/Cdk1, in vitro. Dephosphorylated at Ser-330 by CDC14A and CDC14B around early anaphase. Post-translationally, acetylated by EP300; acetylation leads both to the decreased of SIRT2-mediated alpha-tubulin deacetylase activity and SIRT2-mediated down-regulation of TP53 transcriptional activity. In terms of processing, ubiquitinated. In terms of tissue distribution, expressed in the cerebellum, cerebral cortex and cervival spinal cord. Expressed in Purkinje cells, oligodendrocytes and Schwann cells (at protein level). Expressed in the central nervous system (CNS).

The protein resides in the nucleus. Its subcellular location is the cytoplasm. It localises to the perinuclear region. The protein localises to the cytoskeleton. It is found in the microtubule organizing center. The protein resides in the centrosome. Its subcellular location is the centriole. It localises to the spindle. The protein localises to the midbody. It is found in the chromosome. The protein resides in the perikaryon. Its subcellular location is the cell projection. It localises to the growth cone. The protein localises to the myelin membrane. It catalyses the reaction N(6)-acetyl-L-lysyl-[protein] + NAD(+) + H2O = 2''-O-acetyl-ADP-D-ribose + nicotinamide + L-lysyl-[protein]. The enzyme catalyses N(6)-tetradecanoyl-L-lysyl-[protein] + NAD(+) + H2O = 2''-O-tetradecanoyl-ADP-D-ribose + nicotinamide + L-lysyl-[protein]. It carries out the reaction N(6)-hexadecanoyl-L-lysyl-[protein] + NAD(+) + H2O = 2''-O-hexadecanoyl-ADP-D-ribose + nicotinamide + L-lysyl-[protein]. With respect to regulation, inhibited by Sirtinol, A3 and M15 small molecules. Inhibited by nicotinamide. Inhibited by a macrocyclic peptide inhibitor S2iL5. Inhibited by EP300-induced acetylation. Functionally, NAD-dependent protein deacetylase, which deacetylates internal lysines on histone and alpha-tubulin as well as many other proteins such as key transcription factors. Participates in the modulation of multiple and diverse biological processes such as cell cycle control, genomic integrity, microtubule dynamics, cell differentiation, metabolic networks, and autophagy. Plays a major role in the control of cell cycle progression and genomic stability. Functions in the antephase checkpoint preventing precocious mitotic entry in response to microtubule stress agents, and hence allowing proper inheritance of chromosomes. Positively regulates the anaphase promoting complex/cyclosome (APC/C) ubiquitin ligase complex activity by deacetylating CDC20 and FZR1, then allowing progression through mitosis. Associates both with chromatin at transcriptional start sites (TSSs) and enhancers of active genes. Plays a role in cell cycle and chromatin compaction through epigenetic modulation of the regulation of histone H4 'Lys-20' methylation (H4K20me1) during early mitosis. Specifically deacetylates histone H4 at 'Lys-16' (H4K16ac) between the G2/M transition and metaphase enabling H4K20me1 deposition by KMT5A leading to ulterior levels of H4K20me2 and H4K20me3 deposition throughout cell cycle, and mitotic S-phase progression. Deacetylates KMT5A modulating KMT5A chromatin localization during the mitotic stress response. Also deacetylates histone H3 at 'Lys-57' (H3K56ac) during the mitotic G2/M transition. During oocyte meiosis progression, may deacetylate histone H4 at 'Lys-16' (H4K16ac) and alpha-tubulin, regulating spindle assembly and chromosome alignment by influencing microtubule dynamics and kinetochore function. Deacetylates histone H4 at 'Lys-16' (H4K16ac) at the VEGFA promoter and thereby contributes to regulate expression of VEGFA, a key regulator of angiogenesis. Deacetylates alpha-tubulin at 'Lys-40' and hence controls neuronal motility, oligodendroglial cell arbor projection processes and proliferation of non-neuronal cells. Phosphorylation at Ser-368 by a G1/S-specific cyclin E-CDK2 complex inactivates SIRT2-mediated alpha-tubulin deacetylation, negatively regulating cell adhesion, cell migration and neurite outgrowth during neuronal differentiation. Deacetylates PARD3 and participates in the regulation of Schwann cell peripheral myelination formation during early postnatal development and during postinjury remyelination. Involved in several cellular metabolic pathways. Plays a role in the regulation of blood glucose homeostasis by deacetylating and stabilizing phosphoenolpyruvate carboxykinase PCK1 activity in response to low nutrient availability. Acts as a key regulator in the pentose phosphate pathway (PPP) by deacetylating and activating the glucose-6-phosphate G6PD enzyme, and therefore, stimulates the production of cytosolic NADPH to counteract oxidative damage. Maintains energy homeostasis in response to nutrient deprivation as well as energy expenditure by inhibiting adipogenesis and promoting lipolysis. Attenuates adipocyte differentiation by deacetylating and promoting FOXO1 interaction to PPARG and subsequent repression of PPARG-dependent transcriptional activity. Plays a role in the regulation of lysosome-mediated degradation of protein aggregates by autophagy in neuronal cells. Deacetylates FOXO1 in response to oxidative stress or serum deprivation, thereby negatively regulating FOXO1-mediated autophagy. Deacetylates a broad range of transcription factors and co-regulators regulating target gene expression. Deacetylates transcriptional factor FOXO3 stimulating the ubiquitin ligase SCF(SKP2)-mediated FOXO3 ubiquitination and degradation. Deacetylates HIF1A and therefore promotes HIF1A degradation and inhibition of HIF1A transcriptional activity in tumor cells in response to hypoxia. Deacetylates RELA in the cytoplasm inhibiting NF-kappaB-dependent transcription activation upon TNF-alpha stimulation. Inhibits transcriptional activation by deacetylating p53/TP53 and EP300. Also deacetylates EIF5A. Functions as a negative regulator on oxidative stress-tolerance in response to anoxia-reoxygenation conditions. Plays a role as tumor suppressor. In addition to protein deacetylase activity, also has activity toward long-chain fatty acyl groups and mediates protein-lysine demyristoylation and depalmitoylation of target proteins, such as ARF6 and KRAS, thereby regulating their association with membranes. The chain is NAD-dependent protein deacetylase sirtuin-2 (Sirt2) from Rattus norvegicus (Rat).